The chain runs to 124 residues: Putative iron-sulfur cluster insertion protein ErpA (124 aa).

Iron-sulfur cluster-binding residues include C52, C116, and C118.

This sequence belongs to the HesB/IscA family. As to quaternary structure, homodimer. Iron-sulfur cluster serves as cofactor.

Required for insertion of 4Fe-4S clusters. This is Putative iron-sulfur cluster insertion protein ErpA from Delftia acidovorans (strain DSM 14801 / SPH-1).